We begin with the raw amino-acid sequence, 696 residues long: DNA ligase (696 aa).

NAD(+) is bound by residues 36-40, 85-86, and E123; these read DAEYD and SL. Residue K125 is the N6-AMP-lysine intermediate of the active site. Residues R146, E181, K319, and K343 each contribute to the NAD(+) site. Zn(2+)-binding residues include C437, C440, C455, and C461. In terms of domain architecture, BRCT spans 618 to 696; the sequence is PEGTSLAGKT…EDGLKALLGL (79 aa).

It belongs to the NAD-dependent DNA ligase family. LigA subfamily. It depends on Mg(2+) as a cofactor. The cofactor is Mn(2+).

The enzyme catalyses NAD(+) + (deoxyribonucleotide)n-3'-hydroxyl + 5'-phospho-(deoxyribonucleotide)m = (deoxyribonucleotide)n+m + AMP + beta-nicotinamide D-nucleotide.. DNA ligase that catalyzes the formation of phosphodiester linkages between 5'-phosphoryl and 3'-hydroxyl groups in double-stranded DNA using NAD as a coenzyme and as the energy source for the reaction. It is essential for DNA replication and repair of damaged DNA. This is DNA ligase from Bordetella bronchiseptica (strain ATCC BAA-588 / NCTC 13252 / RB50) (Alcaligenes bronchisepticus).